The chain runs to 399 residues: Elongation factor Tu (399 aa).

The tr-type G domain occupies 10-209 (KPHVNIGTIG…EVDAYIPTPK (200 aa)). Positions 19-26 (GHVDHGKT) are G1. 19-26 (GHVDHGKT) lines the GTP pocket. Thr-26 serves as a coordination point for Mg(2+). A G2 region spans residues 60–64 (GITIA). The segment at 81–84 (DCPG) is G3. Residues 81–85 (DCPGH) and 136–139 (NKQD) contribute to the GTP site. The segment at 136–139 (NKQD) is G4. A G5 region spans residues 174–176 (SAL).

It belongs to the TRAFAC class translation factor GTPase superfamily. Classic translation factor GTPase family. EF-Tu/EF-1A subfamily. Monomer.

It localises to the cytoplasm. The catalysed reaction is GTP + H2O = GDP + phosphate + H(+). GTP hydrolase that promotes the GTP-dependent binding of aminoacyl-tRNA to the A-site of ribosomes during protein biosynthesis. This chain is Elongation factor Tu, found in Helicobacter pylori (strain P12).